Reading from the N-terminus, the 276-residue chain is Undecaprenyl-diphosphatase (276 aa).

6 consecutive transmembrane segments (helical) span residues 43 to 63, 85 to 105, 109 to 129, 183 to 203, 214 to 234, and 249 to 269; these read RAMAFNIIIQLAAILAVVWEF, GNLLLAFMPAVVLGVLFADLI, LFNPVTVAAALVVGGVIMLWA, AATEFSFFLAMPTMVGAAVYS, GDLPVFALGFVTSFIFAMIAV, and FAWYRIVFGLFILATWQFGWV.

The protein belongs to the UppP family.

It localises to the cell inner membrane. It catalyses the reaction di-trans,octa-cis-undecaprenyl diphosphate + H2O = di-trans,octa-cis-undecaprenyl phosphate + phosphate + H(+). Its function is as follows. Catalyzes the dephosphorylation of undecaprenyl diphosphate (UPP). Confers resistance to bacitracin. This chain is Undecaprenyl-diphosphatase, found in Pseudomonas putida (strain ATCC 700007 / DSM 6899 / JCM 31910 / BCRC 17059 / LMG 24140 / F1).